Consider the following 138-residue polypeptide: Large ribosomal subunit protein bL17 (138 aa).

This sequence belongs to the bacterial ribosomal protein bL17 family. As to quaternary structure, part of the 50S ribosomal subunit. Contacts protein L32.

This chain is Large ribosomal subunit protein bL17, found in Methylorubrum extorquens (strain CM4 / NCIMB 13688) (Methylobacterium extorquens).